A 109-amino-acid chain; its full sequence is Large ribosomal subunit protein uL24 (109 aa).

Belongs to the universal ribosomal protein uL24 family. Part of the 50S ribosomal subunit.

Its function is as follows. One of two assembly initiator proteins, it binds directly to the 5'-end of the 23S rRNA, where it nucleates assembly of the 50S subunit. Functionally, one of the proteins that surrounds the polypeptide exit tunnel on the outside of the subunit. The sequence is that of Large ribosomal subunit protein uL24 from Desulforapulum autotrophicum (strain ATCC 43914 / DSM 3382 / VKM B-1955 / HRM2) (Desulfobacterium autotrophicum).